The following is a 432-amino-acid chain: Amino-acid acetyltransferase (432 aa).

One can recognise an N-acetyltransferase domain in the interval Glu286 to Ser425.

This sequence belongs to the acetyltransferase family. ArgA subfamily.

The protein localises to the cytoplasm. It carries out the reaction L-glutamate + acetyl-CoA = N-acetyl-L-glutamate + CoA + H(+). Its pathway is amino-acid biosynthesis; L-arginine biosynthesis; N(2)-acetyl-L-ornithine from L-glutamate: step 1/4. In Azotobacter vinelandii (strain DJ / ATCC BAA-1303), this protein is Amino-acid acetyltransferase.